The sequence spans 400 residues: tRNA(Met) cytidine acetate ligase (400 aa).

ATP contacts are provided by residues 7-20 (ITEY…HIYH), Gly102, Asn165, and Arg190.

The protein belongs to the TmcAL family.

The protein localises to the cytoplasm. The catalysed reaction is cytidine(34) in elongator tRNA(Met) + acetate + ATP = N(4)-acetylcytidine(34) in elongator tRNA(Met) + AMP + diphosphate. Its function is as follows. Catalyzes the formation of N(4)-acetylcytidine (ac(4)C) at the wobble position of elongator tRNA(Met), using acetate and ATP as substrates. First activates an acetate ion to form acetyladenylate (Ac-AMP) and then transfers the acetyl group to tRNA to form ac(4)C34. This chain is tRNA(Met) cytidine acetate ligase, found in Clostridium novyi (strain NT).